Reading from the N-terminus, the 300-residue chain is Ribosomal RNA small subunit methyltransferase H (300 aa).

S-adenosyl-L-methionine is bound by residues 46–48, aspartate 65, phenylalanine 92, aspartate 107, and glutamine 114; that span reads GGH.

It belongs to the methyltransferase superfamily. RsmH family.

It is found in the cytoplasm. It catalyses the reaction cytidine(1402) in 16S rRNA + S-adenosyl-L-methionine = N(4)-methylcytidine(1402) in 16S rRNA + S-adenosyl-L-homocysteine + H(+). Its function is as follows. Specifically methylates the N4 position of cytidine in position 1402 (C1402) of 16S rRNA. The protein is Ribosomal RNA small subunit methyltransferase H of Prochlorococcus marinus (strain MIT 9301).